We begin with the raw amino-acid sequence, 405 residues long: Acetate kinase (405 aa).

Asn-7 is a binding site for Mg(2+). Lys-14 contributes to the ATP binding site. Residue Arg-92 coordinates substrate. Catalysis depends on Asp-149, which acts as the Proton donor/acceptor. Residues 209–213 and 284–286 contribute to the ATP site; these read HLGNG and DMR. Glu-389 serves as a coordination point for Mg(2+).

This sequence belongs to the acetokinase family. As to quaternary structure, homodimer. Mg(2+) serves as cofactor. It depends on Mn(2+) as a cofactor.

The protein resides in the cytoplasm. The enzyme catalyses acetate + ATP = acetyl phosphate + ADP. The protein operates within metabolic intermediate biosynthesis; acetyl-CoA biosynthesis; acetyl-CoA from acetate: step 1/2. Catalyzes the formation of acetyl phosphate from acetate and ATP. Can also catalyze the reverse reaction. This Borrelia garinii subsp. bavariensis (strain ATCC BAA-2496 / DSM 23469 / PBi) (Borreliella bavariensis) protein is Acetate kinase.